Reading from the N-terminus, the 251-residue chain is Hydroxyacylglutathione hydrolase (251 aa).

Zn(2+)-binding residues include His-53, His-55, Asp-57, His-58, His-109, Asp-126, and His-164.

It belongs to the metallo-beta-lactamase superfamily. Glyoxalase II family. Monomer. It depends on Zn(2+) as a cofactor.

The enzyme catalyses an S-(2-hydroxyacyl)glutathione + H2O = a 2-hydroxy carboxylate + glutathione + H(+). It participates in secondary metabolite metabolism; methylglyoxal degradation; (R)-lactate from methylglyoxal: step 2/2. Its function is as follows. Thiolesterase that catalyzes the hydrolysis of S-D-lactoyl-glutathione to form glutathione and D-lactic acid. This chain is Hydroxyacylglutathione hydrolase, found in Wigglesworthia glossinidia brevipalpis.